The primary structure comprises 205 residues: Guanylate kinase (205 aa).

Positions 5–183 (GTLYTVSAPS…ALTEFRSIVV (179 aa)) constitute a Guanylate kinase-like domain. ATP is bound at residue 12–19 (APSGAGKT).

This sequence belongs to the guanylate kinase family.

It is found in the cytoplasm. It carries out the reaction GMP + ATP = GDP + ADP. In terms of biological role, essential for recycling GMP and indirectly, cGMP. The sequence is that of Guanylate kinase from Saccharophagus degradans (strain 2-40 / ATCC 43961 / DSM 17024).